Consider the following 197-residue polypeptide: MLHISRSLTKLLGELKKLPSVGDKTALRLAFHLLKSPENLSALAKSLLEVRDGVRFCSTCFGITESDPCHLCTTPRDDASICVVEEPQDILAMERSQAFKGRYHVLHGALSPLNGVTPGQLRIAELLQRLENGSVKEVLLATNFTVEGEATALYLTRLIKPLSIKVTRLAHGIPIGSDLEYVDAATVQRAVEGRSEL.

The segment at 57–72 (CSTCFGITESDPCHLC) adopts a C4-type zinc-finger fold. Positions 79–174 (ASICVVEEPQ…KVTRLAHGIP (96 aa)) constitute a Toprim domain.

The protein belongs to the RecR family.

Functionally, may play a role in DNA repair. It seems to be involved in an RecBC-independent recombinational process of DNA repair. It may act with RecF and RecO. The sequence is that of Recombination protein RecR from Geotalea uraniireducens (strain Rf4) (Geobacter uraniireducens).